The primary structure comprises 340 residues: Biotin synthase (340 aa).

One can recognise a Radical SAM core domain in the interval 53-280; it reads SAIQLSSLLS…LARVRLSAGR (228 aa). C68, C72, and C75 together coordinate [4Fe-4S] cluster. 4 residues coordinate [2Fe-2S] cluster: C112, C143, C203, and R275.

It belongs to the radical SAM superfamily. Biotin synthase family. In terms of assembly, homodimer. Requires [4Fe-4S] cluster as cofactor. It depends on [2Fe-2S] cluster as a cofactor.

It catalyses the reaction (4R,5S)-dethiobiotin + (sulfur carrier)-SH + 2 reduced [2Fe-2S]-[ferredoxin] + 2 S-adenosyl-L-methionine = (sulfur carrier)-H + biotin + 2 5'-deoxyadenosine + 2 L-methionine + 2 oxidized [2Fe-2S]-[ferredoxin]. Its pathway is cofactor biosynthesis; biotin biosynthesis; biotin from 7,8-diaminononanoate: step 2/2. In terms of biological role, catalyzes the conversion of dethiobiotin (DTB) to biotin by the insertion of a sulfur atom into dethiobiotin via a radical-based mechanism. The polypeptide is Biotin synthase (Bordetella petrii (strain ATCC BAA-461 / DSM 12804 / CCUG 43448)).